The primary structure comprises 241 residues: Leucyl/phenylalanyl-tRNA--protein transferase (241 aa).

The protein belongs to the L/F-transferase family.

It is found in the cytoplasm. The enzyme catalyses N-terminal L-lysyl-[protein] + L-leucyl-tRNA(Leu) = N-terminal L-leucyl-L-lysyl-[protein] + tRNA(Leu) + H(+). It carries out the reaction N-terminal L-arginyl-[protein] + L-leucyl-tRNA(Leu) = N-terminal L-leucyl-L-arginyl-[protein] + tRNA(Leu) + H(+). It catalyses the reaction L-phenylalanyl-tRNA(Phe) + an N-terminal L-alpha-aminoacyl-[protein] = an N-terminal L-phenylalanyl-L-alpha-aminoacyl-[protein] + tRNA(Phe). Its function is as follows. Functions in the N-end rule pathway of protein degradation where it conjugates Leu, Phe and, less efficiently, Met from aminoacyl-tRNAs to the N-termini of proteins containing an N-terminal arginine or lysine. The chain is Leucyl/phenylalanyl-tRNA--protein transferase from Neisseria meningitidis serogroup C (strain 053442).